Consider the following 274-residue polypeptide: UPF0758 protein RHE_CH01848 (274 aa).

The interval 1–37 (MAKGPVATSSDDELPFETEEPVADERSFFGGRPQKPA) is disordered. Over residues 10–22 (SDDELPFETEEPV) the composition is skewed to acidic residues. Residues 152–274 (VLSSWSSVIQ…HVSLKGLKLI (123 aa)) enclose the MPN domain. Zn(2+) is bound by residues histidine 223, histidine 225, and aspartate 236. Residues 223–236 (HNHPSGDPTPSRAD) carry the JAMM motif motif.

Belongs to the UPF0758 family.

The chain is UPF0758 protein RHE_CH01848 from Rhizobium etli (strain ATCC 51251 / DSM 11541 / JCM 21823 / NBRC 15573 / CFN 42).